The following is a 359-amino-acid chain: MMAGCGEIDHSINMLPTNRKANESCSNTAPSLTVPECAICLQTCVHPVSLPCKHVFCYLCVKGASWLGKRCALCRQEIPEDFLDKPTLLSPEELKAASRGNGEYAWYYEGRNGWWQYDERTSRELEDAFSKGKKNTEMLIAGFLYVADLENMVQYRRNEHGRRRKIKRDIIDIPKKGVAGLRLDCDANTVNLARESSADGADSVSAQSGASVQPLVSSVRPLTSVDGQLTSPATPSPDASTSLEDSFAHLQLSGDNTAERSHRGEGEEDHESPSSGRVPAPDTSIEETESDASSDSEDVSAVVAQHSLTQQRLLVSNANQTVPDRSDRSGTDRSVAGGGTVSVSVRSRRPDGQCTVTEV.

An RING-type zinc finger spans residues 37–75 (CAICLQTCVHPVSLPCKHVFCYLCVKGASWLGKRCALCR). Residues Lys-85 and Lys-95 each participate in a glycyl lysine isopeptide (Lys-Gly) (interchain with G-Cter in ubiquitin) cross-link. Positions 92–168 (EELKAASRGN…EHGRRRKIKR (77 aa)) constitute a WWE domain. Positions 108, 111, and 115 each coordinate a glycoprotein. Residue Lys-131 forms a Glycyl lysine isopeptide (Lys-Gly) (interchain with G-Cter in ubiquitin) linkage. A glycoprotein contacts are provided by Tyr-145, Gln-154, Arg-164, and Lys-176. Residue Lys-176 forms a Glycyl lysine isopeptide (Lys-Gly) (interchain with G-Cter in ubiquitin) linkage. The disordered stretch occupies residues 254–359 (GDNTAERSHR…PDGQCTVTEV (106 aa)). Acidic residues predominate over residues 284-298 (SIEETESDASSDSED). Ser-290 and Ser-294 each carry phosphoserine. Residues 306–323 (HSLTQQRLLVSNANQTVP) are compositionally biased toward polar residues.

As to quaternary structure, can form homooligomers. Interacts with PARsylated AXIN1, AXIN2, BLZF1, CASC3, H1-2, IPO7, LIG3, NCL, PARP1, XRCC1, XRCC5 and XRCC6. Interacts with DDB1, DHX15, IQGAP1, LRPPRC, PARP2, PRKDC, RUVBL2, TNKS1 and TNKS2. Binding often leads to interactor ubiquitination, in the presence of the appropriate E1 and E2 enzymes, and proteasomal degradation. In terms of processing, ubiquitinated; autoubiquitinated. Polyubiquitinated in the presence of UBE2D1, UBE2D2 and UBE2D3. Multimonoubiquitinated in the presence of UBE2E1. Not ubiquitinated in the presence of UBE2H, CDC34, UBE2L3, UBE2L6, nor UBE2C. In the absence of PAR, autoubiquitination occurs on Lys-85, Lys-95 and Lys-176 via 'Lys-11' and 'Lys-48' ubiquitin linkages. In the presence of PAR, Lys-131 and Lys-176 are ubiquitinated via 'Lys-6', 'Lys-33' and 'Lys-48' ubiquitin linkages. Autoubiquitination is enhanced upon PAR-binding. Ubiquitously expressed. Up-regulated in brains from patients with Alzheimer disease.

The protein localises to the cytoplasm. Its subcellular location is the cytosol. It is found in the nucleus. It carries out the reaction S-ubiquitinyl-[E2 ubiquitin-conjugating enzyme]-L-cysteine + [acceptor protein]-L-lysine = [E2 ubiquitin-conjugating enzyme]-L-cysteine + N(6)-ubiquitinyl-[acceptor protein]-L-lysine.. It functions in the pathway protein modification; protein ubiquitination. Its function is as follows. E3 ubiquitin-protein ligase that specifically binds poly-ADP-ribosylated (PARsylated) proteins and mediates their ubiquitination and subsequent degradation. May regulate many important biological processes, such as cell survival and DNA damage response. Acts as an activator of the Wnt signaling pathway by mediating the ubiquitination of PARsylated AXIN1 and AXIN2, 2 key components of the beta-catenin destruction complex. Acts in cooperation with tankyrase proteins (TNKS and TNKS2), which mediate PARsylation of target proteins AXIN1, AXIN2, BLZF1, CASC3, TNKS and TNKS2. Recognizes and binds tankyrase-dependent PARsylated proteins via its WWE domain and mediates their ubiquitination, leading to their degradation. Different ubiquitin linkage types have been observed: TNKS2 undergoes ubiquitination at 'Lys-48' and 'Lys-63', while AXIN1 is only ubiquitinated at 'Lys-48'. May regulate TNKS and TNKS2 subcellular location, preventing aggregation at a centrosomal location. Neuroprotective protein. Protects the brain against N-methyl-D-aspartate (NMDA) receptor-mediated glutamate excitotoxicity and ischemia, by interfering with PAR-induced cell death, called parthanatos. Prevents nuclear translocation of AIFM1 in a PAR-binding dependent manner. Does not affect PARP1 activation. Protects against cell death induced by DNA damaging agents, such as N-methyl-N-nitro-N-nitrosoguanidine (MNNG) and rescues cells from G1 arrest. Promotes cell survival after gamma-irradiation. Facilitates DNA repair. This chain is E3 ubiquitin-protein ligase RNF146 (RNF146), found in Homo sapiens (Human).